We begin with the raw amino-acid sequence, 289 residues long: Digeranylgeranylglyceryl phosphate synthase (289 aa).

The next 8 membrane-spanning stretches (helical) occupy residues 18–38 (LMAG…LISG), 47–67 (AFPF…SGAG), 99–119 (FYFS…INSI), 120–140 (CGSI…TLKG), 163–183 (IFGF…ALAI), 218–238 (LAVL…FMSV), 243–263 (YIYL…QLLV), and 269–289 (KSSK…IAGV).

The protein belongs to the UbiA prenyltransferase family. DGGGP synthase subfamily. Mg(2+) is required as a cofactor.

The protein localises to the cell membrane. The catalysed reaction is sn-3-O-(geranylgeranyl)glycerol 1-phosphate + (2E,6E,10E)-geranylgeranyl diphosphate = 2,3-bis-O-(geranylgeranyl)-sn-glycerol 1-phosphate + diphosphate. It participates in membrane lipid metabolism; glycerophospholipid metabolism. Its function is as follows. Prenyltransferase that catalyzes the transfer of the geranylgeranyl moiety of geranylgeranyl diphosphate (GGPP) to the C2 hydroxyl of (S)-3-O-geranylgeranylglyceryl phosphate (GGGP). This reaction is the second ether-bond-formation step in the biosynthesis of archaeal membrane lipids. This Methanosarcina mazei (strain ATCC BAA-159 / DSM 3647 / Goe1 / Go1 / JCM 11833 / OCM 88) (Methanosarcina frisia) protein is Digeranylgeranylglyceryl phosphate synthase.